Here is a 319-residue protein sequence, read N- to C-terminus: Acetyl-coenzyme A carboxylase carboxyl transferase subunit alpha (319 aa).

The 262-residue stretch at 35 to 296 folds into the CoA carboxyltransferase C-terminal domain; sequence NIDEEVHRLR…KAQLLTDLAD (262 aa).

The protein belongs to the AccA family. In terms of assembly, acetyl-CoA carboxylase is a heterohexamer composed of biotin carboxyl carrier protein (AccB), biotin carboxylase (AccC) and two subunits each of ACCase subunit alpha (AccA) and ACCase subunit beta (AccD).

The protein localises to the cytoplasm. The catalysed reaction is N(6)-carboxybiotinyl-L-lysyl-[protein] + acetyl-CoA = N(6)-biotinyl-L-lysyl-[protein] + malonyl-CoA. It functions in the pathway lipid metabolism; malonyl-CoA biosynthesis; malonyl-CoA from acetyl-CoA: step 1/1. In terms of biological role, component of the acetyl coenzyme A carboxylase (ACC) complex. First, biotin carboxylase catalyzes the carboxylation of biotin on its carrier protein (BCCP) and then the CO(2) group is transferred by the carboxyltransferase to acetyl-CoA to form malonyl-CoA. In Escherichia coli O45:K1 (strain S88 / ExPEC), this protein is Acetyl-coenzyme A carboxylase carboxyl transferase subunit alpha.